A 250-amino-acid chain; its full sequence is High affinity immunoglobulin epsilon receptor subunit alpha (250 aa).

The N-terminal stretch at 1–23 (MVTGRSAQLCLALLFMSLDVILT) is a signal peptide. The Extracellular segment spans residues 24–204 (ATEKSVLTLD…AYKCKYYWLQ (181 aa)). The 77-residue stretch at 28–104 (SVLTLDPPWI…QGLFKSKPVY (77 aa)) folds into the Ig-like 1 domain. Cysteine 49 and cysteine 92 are disulfide-bonded. Asparagine 58, asparagine 66, asparagine 73, asparagine 106, asparagine 152, and asparagine 167 each carry an N-linked (GlcNAc...) asparagine glycan. The Ig-like 2 domain occupies 114–181 (LQTSADMVLV…YHCKGYLRQV (68 aa)). The cysteines at positions 131 and 174 are disulfide-linked. A helical membrane pass occupies residues 205–223 (LIFPLLVAILFAVDTGLLL). Topologically, residues 224 to 250 (STEEQFKSVLEIQKTGKYKKVETELLT) are cytoplasmic.

In terms of assembly, tetramer of an alpha chain, a beta chain, and two disulfide linked gamma chains. Interacts with IGHE (via CH3 region). As to expression, expressed in bone marrow mast cells, as well as in the pineal gland at night.

It localises to the cell membrane. Functionally, high-affinity receptor for immunoglobulin epsilon/IgE. Mediates IgE effector functions in myeloid cells. Upon IgE binding and antigen/allergen cross-linking initiates signaling pathways that lead to myeloid cell activation and differentiation. On mast cells, basophils and eosinophils stimulates the secretion of vasoactive amines, lipid mediators and cytokines that contribute to inflammatory response, tissue remodeling and cytotoxicity against microbes. Triggers the immediate hypersensitivity response to allergens as a host defense mechanism against helminth parasites, pathogenic bacteria and venom toxicity. When dysregulated, it can elicit harmful life-threatening allergic and anaphylactic reactions. The chain is High affinity immunoglobulin epsilon receptor subunit alpha (Fcer1a) from Mus musculus (Mouse).